The following is a 445-amino-acid chain: Trigger factor (445 aa).

Positions 172-257 (GDQVVIDFVG…VKSVNWAHMP (86 aa)) constitute a PPIase FKBP-type domain.

This sequence belongs to the FKBP-type PPIase family. Tig subfamily.

Its subcellular location is the cytoplasm. The catalysed reaction is [protein]-peptidylproline (omega=180) = [protein]-peptidylproline (omega=0). Its function is as follows. Involved in protein export. Acts as a chaperone by maintaining the newly synthesized protein in an open conformation. Functions as a peptidyl-prolyl cis-trans isomerase. The chain is Trigger factor from Polynucleobacter asymbioticus (strain DSM 18221 / CIP 109841 / QLW-P1DMWA-1) (Polynucleobacter necessarius subsp. asymbioticus).